Here is a 120-residue protein sequence, read N- to C-terminus: Large ribosomal subunit protein bL19 (120 aa).

This sequence belongs to the bacterial ribosomal protein bL19 family.

Functionally, this protein is located at the 30S-50S ribosomal subunit interface and may play a role in the structure and function of the aminoacyl-tRNA binding site. This is Large ribosomal subunit protein bL19 from Chlorobium phaeobacteroides (strain DSM 266 / SMG 266 / 2430).